Reading from the N-terminus, the 156-residue chain is ATP synthase subunit b (156 aa).

Residues 7 to 27 traverse the membrane as a helical segment; the sequence is FFAQMVVFFILWWVVAKFIWP.

The protein belongs to the ATPase B chain family. As to quaternary structure, F-type ATPases have 2 components, F(1) - the catalytic core - and F(0) - the membrane proton channel. F(1) has five subunits: alpha(3), beta(3), gamma(1), delta(1), epsilon(1). F(0) has three main subunits: a(1), b(2) and c(10-14). The alpha and beta chains form an alternating ring which encloses part of the gamma chain. F(1) is attached to F(0) by a central stalk formed by the gamma and epsilon chains, while a peripheral stalk is formed by the delta and b chains.

The protein localises to the cell inner membrane. In terms of biological role, f(1)F(0) ATP synthase produces ATP from ADP in the presence of a proton or sodium gradient. F-type ATPases consist of two structural domains, F(1) containing the extramembraneous catalytic core and F(0) containing the membrane proton channel, linked together by a central stalk and a peripheral stalk. During catalysis, ATP synthesis in the catalytic domain of F(1) is coupled via a rotary mechanism of the central stalk subunits to proton translocation. Component of the F(0) channel, it forms part of the peripheral stalk, linking F(1) to F(0). The sequence is that of ATP synthase subunit b from Cupriavidus taiwanensis (strain DSM 17343 / BCRC 17206 / CCUG 44338 / CIP 107171 / LMG 19424 / R1) (Ralstonia taiwanensis (strain LMG 19424)).